A 538-amino-acid polypeptide reads, in one-letter code: UNC93-like protein (538 aa).

N-linked (GlcNAc...) asparagine glycosylation occurs at N45. Helical transmembrane passes span 46-66, 80-100, 105-125, 128-148, and 170-190; these read ISII…TANL, SLSA…TLII, VKWT…FQLF, FYTL…MWAS, and AIIV…ELWG. The N-linked (GlcNAc...) asparagine glycan is linked to N210. The next 7 helical transmembrane spans lie at 244-264, 305-325, 338-358, 366-386, 394-414, 435-455, and 457-477; these read IFEI…IIAF, LLIP…ADFT, IGFV…LFGS, TPII…ELFW, IIFY…QTQI, LWES…CTQM, and LYIL…VEIL.

Belongs to the unc-93 family.

It localises to the membrane. This is UNC93-like protein from Drosophila melanogaster (Fruit fly).